Here is a 186-residue protein sequence, read N- to C-terminus: Large ribosomal subunit protein uL22 (186 aa).

It belongs to the universal ribosomal protein uL22 family. As to quaternary structure, component of the large ribosomal subunit (LSU). Mature N.crassa ribosomes consist of a small (40S) and a large (60S) subunit. The 40S small subunit contains 1 molecule of ribosomal RNA (18S rRNA) and at least 32 different proteins. The large 60S subunit contains 3 rRNA molecules (26S, 5.8S and 5S rRNA) and at least 42 different proteins.

It is found in the cytoplasm. In terms of biological role, component of the ribosome, a large ribonucleoprotein complex responsible for the synthesis of proteins in the cell. The small ribosomal subunit (SSU) binds messenger RNAs (mRNAs) and translates the encoded message by selecting cognate aminoacyl-transfer RNA (tRNA) molecules. The large subunit (LSU) contains the ribosomal catalytic site termed the peptidyl transferase center (PTC), which catalyzes the formation of peptide bonds, thereby polymerizing the amino acids delivered by tRNAs into a polypeptide chain. The nascent polypeptides leave the ribosome through a tunnel in the LSU and interact with protein factors that function in enzymatic processing, targeting, and the membrane insertion of nascent chains at the exit of the ribosomal tunnel. The protein is Large ribosomal subunit protein uL22 (rpl-17) of Neurospora crassa (strain ATCC 24698 / 74-OR23-1A / CBS 708.71 / DSM 1257 / FGSC 987).